Here is a 560-residue protein sequence, read N- to C-terminus: MSASLDTGDFQEFLKHGLTAIASAPGSETRHSPKREEQLREKRAGLPDRHRRPIPARSRLVMLPKVETEAPGLVRSHGEQGQMPENMQVSQFKMVNYSYDEDLEELCPVCGDKVSGYHYGLLTCESCKGFFKRTVQNQKRYTCIENQNCQIDKTQRKRCPYCRFKKCIDVGMKLEAVRADRMRGGRNKFGPMYKRDRALKQQKKALIRANGLKLEAMSQVIQAMPSDLTSAIQNIHSASKGLPLSHVALPPTDYDRSPFVTSPISMTMPPHSSLHGYQPYGHFPSRAIKSEYPDPYSSSPESMMGYSYMDGYQTNSPASIPHLILELLKCEPDEPQVQAKIMAYLQQEQSNRNRQEKLSAFGLLCKMADQTLFSIVEWARSSIFFRELKVDDQMKLLQNCWSELLILDHIYRQVAHGKEGTIFLVTGEHVDYSTIISHTEVAFNNLLSLAQELVVRLRSLQFDQREFVCLKFLVLFSSDVKNLENLQLVEGVQEQVNAALLDYTVCNYPQQTEKFGQLLLRLPEIRAISKQAEDYLYYKHVNGDVPYNNLLIEMLHAKRA.

The segment at 21 to 55 is disordered; the sequence is IASAPGSETRHSPKREEQLREKRAGLPDRHRRPIP. The span at 28–48 shows a compositional bias: basic and acidic residues; the sequence is ETRHSPKREEQLREKRAGLPD. Positions 104 to 175 form a DNA-binding region, nuclear receptor; that stretch reads EELCPVCGDK…KCIDVGMKLE (72 aa). Zn(2+) is bound by residues C107, C110, C124, C127, C143, C149, C159, and C162. 2 consecutive NR C4-type zinc fingers follow at residues 107-127 and 143-167; these read CPVC…CESC and CIEN…FKKC. The interval 173 to 188 is C-terminal extension (CTE); that stretch reads KLEAVRADRMRGGRNK. The FTZ-F1 box signature appears at 189-208; that stretch reads FGPMYKRDRALKQQKKALIR. A Glycyl lysine isopeptide (Lys-Gly) (interchain with G-Cter in SUMO1) cross-link involves residue K289. The NR LBD domain maps to 319-558; it reads SIPHLILELL…NLLIEMLHAK (240 aa). The a phospholipid derivative site is built by Y535 and K539. The segment at 547–558 is AF-2; sequence YNNLLIEMLHAK.

The protein belongs to the nuclear hormone receptor family. NR5 subfamily. As to quaternary structure, monomer; Binds DNA as a monomer. Interacts with nuclear receptor corepressors NR0B1 and NR0B2; repressing NR5A2 nuclear receptor activity. Interacts with nuclear receptor coactivators CTNNB1, PPARGC1A and NCOA2; interaction takes place following ligand-binding and promotes target gene activation. Interacts (when sumoylated) with GPS2; interaction with GPS2 onto hepatic acute phase protein promoters prevents N-Cor corepressor complex dissociation. Interacts with HNF1A. Interacts with GRIP1. Sumoylated by SUMO1 at Lys-289 during the hepatic acute phase response, leading to promote interaction with GPS2 and prevent N-Cor corepressor complex dissociation.

The protein resides in the nucleus. Its subcellular location is the chromosome. In terms of biological role, orphan nuclear receptor that binds DNA as a monomer to the 5'-TCAAGGCCA-3' sequence and controls expression of target genes: regulates key biological processes, such as early embryonic development, cholesterol and bile acid synthesis pathways, as well as liver and pancreas morphogenesis. Ligand-binding causes conformational change which causes recruitment of coactivators, promoting target gene activation. The specific ligand is unknown, but specific phospholipids, such as phosphatidylethanolamine, phosphatidylserine, dilauroyl phosphatidylcholine and diundecanoyl phosphatidylcholine can act as ligand in vitro. Acts as a pioneer transcription factor, which unwraps target DNA from histones and elicits local opening of closed chromatin. Plays a central role during preimplantation stages of embryonic development. Plays a minor role in zygotic genome activation (ZGA) by regulating a small set of two-cell stage genes. Plays a major role in morula development (2-16 cells embryos) by acting as a master regulator at the 8-cell stage, controlling expression of lineage-specifying transcription factors and genes involved in mitosis, telomere maintenance and DNA repair. Zygotic NR5A2 binds to both closed and open chromatin with other transcription factors, often at SINE B1/Alu repeats DNA elements, promoting chromatin accessibility at nearby regulatory regions. Also involved in the epiblast stage of development and embryonic stem cell pluripotency, by promoting expression of POU5F1/OCT4. Regulates other processes later in development, such as formation of connective tissue in lower jaw and middle ear, neural stem cell differentiation, ovarian follicle development and Sertoli cell differentiation. Involved in exocrine pancreas development and acinar cell differentiation. Acts as an essential transcriptional regulator of lipid metabolism. Key regulator of cholesterol 7-alpha-hydroxylase gene (CYP7A) expression in liver. Activates the transcription of CYP2C38. Also acts as a negative regulator of inflammation in different organs, such as intestine, liver and pancreas. Protects against intestinal inflammation via its ability to regulate glucocorticoid production. Plays an anti-inflammatory role during the hepatic acute phase response by acting as a corepressor: inhibits the hepatic acute phase response by preventing dissociation of the N-Cor corepressor complex. Acts as a regulator of immunity by promoting lymphocyte T-cell development, proliferation and effector functions. Also involved in resolution of endoplasmic reticulum stress in the liver. The chain is Nuclear receptor subfamily 5 group A member 2 from Mus musculus (Mouse).